We begin with the raw amino-acid sequence, 370 residues long: Binary larvicide subunit BinA (370 aa).

A propeptide spanning residues 1–6 (MRNLDF) is cleaved from the precursor. The segment at 1 to 155 (MRNLDFIDSF…LISNKEQIYL (155 aa)) is beta-trefoil domain. A disulfide bond links cysteine 31 and cysteine 47. The segment at 156–370 (TLPSLPENEQ…NTKIITDDQN (215 aa)) is pore-forming domain.

This sequence belongs to the toxin_10 family. As to quaternary structure, forms a heterodimer with BinB. Processed by proteases in the mosquito gut, probably at both the N- and C-termini.

The protein resides in the spore. It localises to the perispore. Its function is as follows. Component of a binary toxin active against Culex and some Aedes mosquito larvae. The individual subunits are not toxic. BinAB binds to the gastric caecum and posterior midgut of C.quinquefasciatus larvae; this subunit alone binds the entire larval gut. Binary toxin internalization into host gut cells requires both proteins. Toxic to Aedes atropalpus mosquito larvae; mortality towards both C.quinquefasciatus and A.atropalpus is maximal by 48 hours. A.aegypti is not very susceptible to this toxin. This Lysinibacillus sphaericus (Bacillus sphaericus) protein is Binary larvicide subunit BinA (binA).